The following is a 470-amino-acid chain: Fumarate hydratase class II (470 aa).

Residues 99-101 (SGT), 129-132 (HPND), 139-141 (SSN), and T187 contribute to the substrate site. Residue H188 is the Proton donor/acceptor of the active site. The active site involves S318. Substrate-binding positions include S319 and 324–326 (KIN).

Belongs to the class-II fumarase/aspartase family. Fumarase subfamily. In terms of assembly, homotetramer.

The protein resides in the cytoplasm. It carries out the reaction (S)-malate = fumarate + H2O. It functions in the pathway carbohydrate metabolism; tricarboxylic acid cycle; (S)-malate from fumarate: step 1/1. In terms of biological role, involved in the TCA cycle. Catalyzes the stereospecific interconversion of fumarate to L-malate. This chain is Fumarate hydratase class II, found in Halobacterium salinarum (strain ATCC 700922 / JCM 11081 / NRC-1) (Halobacterium halobium).